Reading from the N-terminus, the 548-residue chain is MFS-rype transporter paaT (548 aa).

Basic and acidic residues predominate over residues 1–10 (MEAPRSDQAH). Positions 1–32 (MEAPRSDQAHTDATTPMEAIRTTSLGTNNYGP) are disordered. Polar residues predominate over residues 21 to 30 (RTTSLGTNNY). Asn-70 and Asn-93 each carry an N-linked (GlcNAc...) asparagine glycan. A run of 12 helical transmembrane segments spans residues 100–120 (WYCT…SSVI), 139–159 (LVVI…FAPM), 174–194 (ALAV…TLIV), 197–217 (LIDG…LADL), 224–244 (GVPM…GPLV), 256–276 (WLYW…TFTV), 332–352 (IVLF…MFFV), 370–390 (GLMF…APFV), 411–431 (LIPM…FAWT), 436–456 (LHWM…ILLY), 471–493 (AASA…VLFT), and 505–525 (ASTL…VFYF). A Peroxisomal targeting signal motif is present at residues 258–269 (YWIQLILAFVAW).

This sequence belongs to the major facilitator superfamily. DHA1 family. Polyamines/proton antiporter (TC 2.A.1.2.16) subfamily.

It localises to the peroxisome membrane. Functionally, MFS-type transporter involved in penicillin production, most likely through the translocation of side-chain precursors (phenylacetic acid and phenoxyacetic acid) from the cytosol to the peroxisomal lumen across the peroxisomal membrane. In Penicillium rubens (strain ATCC 28089 / DSM 1075 / NRRL 1951 / Wisconsin 54-1255) (Penicillium chrysogenum), this protein is MFS-rype transporter paaT.